Reading from the N-terminus, the 213-residue chain is Ribosomal RNA small subunit methyltransferase G (213 aa).

S-adenosyl-L-methionine contacts are provided by residues Gly75, Phe80, 128–129 (IE), and Arg144.

The protein belongs to the methyltransferase superfamily. RNA methyltransferase RsmG family.

It localises to the cytoplasm. The catalysed reaction is guanosine(527) in 16S rRNA + S-adenosyl-L-methionine = N(7)-methylguanosine(527) in 16S rRNA + S-adenosyl-L-homocysteine. In terms of biological role, specifically methylates the N7 position of guanine in position 527 of 16S rRNA. The polypeptide is Ribosomal RNA small subunit methyltransferase G (Brucella abortus (strain S19)).